The primary structure comprises 526 residues: Putative D-lactate dehydrogenase C713.03, mitochondrial (526 aa).

The 180-residue stretch at 93–272 (YRGKTQLALK…TKLSVICPKR (180 aa)) folds into the FAD-binding PCMH-type domain.

This sequence belongs to the FAD-binding oxidoreductase/transferase type 4 family. FAD is required as a cofactor.

Its subcellular location is the mitochondrion matrix. The catalysed reaction is (R)-lactate + 2 Fe(III)-[cytochrome c] = 2 Fe(II)-[cytochrome c] + pyruvate + 2 H(+). The protein is Putative D-lactate dehydrogenase C713.03, mitochondrial of Schizosaccharomyces pombe (strain 972 / ATCC 24843) (Fission yeast).